Here is a 209-residue protein sequence, read N- to C-terminus: Large ribosomal subunit protein uL4 (209 aa).

Positions 47–72 are disordered; sequence TSSTKTRSEVRGSSKKPWKQKGTGRA. Residues 59–72 show a composition bias toward basic residues; sequence SSKKPWKQKGTGRA.

It belongs to the universal ribosomal protein uL4 family. As to quaternary structure, part of the 50S ribosomal subunit.

In terms of biological role, one of the primary rRNA binding proteins, this protein initially binds near the 5'-end of the 23S rRNA. It is important during the early stages of 50S assembly. It makes multiple contacts with different domains of the 23S rRNA in the assembled 50S subunit and ribosome. Forms part of the polypeptide exit tunnel. This Borreliella burgdorferi (strain ZS7) (Borrelia burgdorferi) protein is Large ribosomal subunit protein uL4.